The sequence spans 683 residues: Elongation factor G 1 (683 aa).

One can recognise a tr-type G domain in the interval 3–278 (DKMRNIGIMA…AVVDFLPAPN (276 aa)). GTP-binding positions include 12–19 (AHIDAGKT), 76–80 (DTPGH), and 130–133 (NKMD).

The protein belongs to the TRAFAC class translation factor GTPase superfamily. Classic translation factor GTPase family. EF-G/EF-2 subfamily.

It is found in the cytoplasm. Catalyzes the GTP-dependent ribosomal translocation step during translation elongation. During this step, the ribosome changes from the pre-translocational (PRE) to the post-translocational (POST) state as the newly formed A-site-bound peptidyl-tRNA and P-site-bound deacylated tRNA move to the P and E sites, respectively. Catalyzes the coordinated movement of the two tRNA molecules, the mRNA and conformational changes in the ribosome. This Treponema denticola (strain ATCC 35405 / DSM 14222 / CIP 103919 / JCM 8153 / KCTC 15104) protein is Elongation factor G 1.